Reading from the N-terminus, the 1749-residue chain is Intraflagellar transport protein 172 homolog (1749 aa).

Met-1 carries the N-acetylmethionine modification. Lys-4 participates in a covalent cross-link: Glycyl lysine isopeptide (Lys-Gly) (interchain with G-Cter in SUMO1). WD repeat units lie at residues 14-53 (DGAA…RDKF), 64-103 (RKSY…GDKK), 110-148 (IQTS…SSTI), 150-191 (GTES…ESQG), 195-233 (NHPC…QTFD), 238-278 (PQER…WEEA), 284-323 (TNLY…SIYK), 483-520 (SHES…CSKT), and 521-559 (MILN…ERVT). One copy of the TPR 1 repeat lies at 593 to 624 (DEGLIEFGTAIDDGNYIRATAFLETLEMTPET). Arg-672 is subject to Omega-N-methylarginine. 13 TPR repeats span residues 692–725 (EKNY…DECI), 809–842 (GELY…MKAV), 854–887 (VKLE…IKAI), 912–945 (SKYY…KDAI), 947–970 (MYTQ…PEDV), 971–1004 (SVLY…DLAI), 1042–1075 (EGRL…EEAY), 1142–1175 (PEVH…KEAV), 1276–1309 (VEGF…GNSG), 1345–1378 (IGKH…NKAK), 1411–1445 (GVDV…LHKY), 1447–1477 (ALYA…NPQN), and 1574–1607 (DKAF…TDAI).

Belongs to the IFT172 family. As to quaternary structure, interacts with IFT88. Interacts with IFT57. Interacts with RABL2/RABL2A; binds preferentially to GDP-bound RABL2.

It is found in the cell projection. It localises to the cilium. Its function is as follows. Required for the maintenance and formation of cilia. Plays an indirect role in hedgehog (Hh) signaling, cilia being required for all activity of the hedgehog pathway. In Homo sapiens (Human), this protein is Intraflagellar transport protein 172 homolog (IFT172).